We begin with the raw amino-acid sequence, 1054 residues long: DIS3-like exonuclease 1 (1054 aa).

The 78-residue stretch at 236–313 (AGIKSGRYIQ…WKGRTAALCE (78 aa)) folds into the CSD1 domain. A disordered region spans residues 313–332 (ENDSEDKASGESPSEPMPTG). The region spanning 365 to 431 (ILVTPWDYRI…GEIATILVEN (67 aa)) is the CSD2 domain. The RNB domain occupies 465–816 (RRDLRSTHLV…VHRLLMAAIS (352 aa)). The residue at position 989 (Ser989) is a Phosphoserine.

It belongs to the RNR ribonuclease family. As to quaternary structure, component of the RNA exosome complex. The catalytically inactive RNA exosome core (Exo-9) complex is believed to associate with catalytic subunits EXOSC10, and DIS3 or DIS3L in cytoplasmic- and nuclear-specific RNA exosome complex forms. Mg(2+) serves as cofactor.

It is found in the cytoplasm. The catalysed reaction is Exonucleolytic cleavage in the 3'- to 5'-direction to yield nucleoside 5'-phosphates.. Its function is as follows. Catalytic component of the RNA exosome complex which has 3'-&gt;5' exoribonuclease activity and participates in a multitude of cellular RNA processing and degradation events. In the cytoplasm, the RNA exosome complex is involved in general mRNA turnover and specifically degrades inherently unstable mRNAs containing AU-rich elements (AREs) within their 3' untranslated regions, and in RNA surveillance pathways, preventing translation of aberrant mRNAs. It seems to be involved in degradation of histone mRNA. This is DIS3-like exonuclease 1 (Dis3l) from Rattus norvegicus (Rat).